The following is a 235-amino-acid chain: UPF0758 protein COPRO5265_1522 (235 aa).

The MPN domain maps to 109–235 (RITTPEDAIE…HVSLAREKLI (127 aa)). 3 residues coordinate Zn(2+): histidine 184, histidine 186, and aspartate 197. A JAMM motif motif is present at residues 184 to 197 (HNHPSGDPSPSRED).

It belongs to the UPF0758 family.

The polypeptide is UPF0758 protein COPRO5265_1522 (Coprothermobacter proteolyticus (strain ATCC 35245 / DSM 5265 / OCM 4 / BT)).